The sequence spans 703 residues: Elongation factor G (703 aa).

In terms of domain architecture, tr-type G spans asparagine 10–leucine 286. GTP-binding positions include alanine 19–threonine 26, aspartate 83–histidine 87, and asparagine 137–aspartate 140.

It belongs to the TRAFAC class translation factor GTPase superfamily. Classic translation factor GTPase family. EF-G/EF-2 subfamily.

Its subcellular location is the cytoplasm. Catalyzes the GTP-dependent ribosomal translocation step during translation elongation. During this step, the ribosome changes from the pre-translocational (PRE) to the post-translocational (POST) state as the newly formed A-site-bound peptidyl-tRNA and P-site-bound deacylated tRNA move to the P and E sites, respectively. Catalyzes the coordinated movement of the two tRNA molecules, the mRNA and conformational changes in the ribosome. The sequence is that of Elongation factor G from Nocardioides sp. (strain ATCC BAA-499 / JS614).